Here is a 70-residue protein sequence, read N- to C-terminus: Large ribosomal subunit protein bL31 (70 aa).

Lys-8 is subject to N6-acetyllysine. Zn(2+) contacts are provided by Cys-16, Cys-18, Cys-37, and Cys-40.

This sequence belongs to the bacterial ribosomal protein bL31 family. Type A subfamily. As to quaternary structure, part of the 50S ribosomal subunit. It depends on Zn(2+) as a cofactor.

Its function is as follows. Binds the 23S rRNA. The sequence is that of Large ribosomal subunit protein bL31 from Escherichia coli O6:K15:H31 (strain 536 / UPEC).